The chain runs to 217 residues: Large ribosomal subunit protein bL25 (217 aa).

The interval 178 to 217 (VVAPTEEPTEEEIEAMEGEQQTEEPEVVGESKEDEEKTEE) is disordered. A compositionally biased stretch (acidic residues) spans 184-205 (EPTEEEIEAMEGEQQTEEPEVV). Over residues 206-217 (GESKEDEEKTEE) the composition is skewed to basic and acidic residues.

It belongs to the bacterial ribosomal protein bL25 family. CTC subfamily. Part of the 50S ribosomal subunit; part of the 5S rRNA/L5/L18/L25 subcomplex. Contacts the 5S rRNA. Binds to the 5S rRNA independently of L5 and L18.

Its function is as follows. This is one of the proteins that binds to the 5S RNA in the ribosome where it forms part of the central protuberance. This is Large ribosomal subunit protein bL25 from Staphylococcus aureus (strain MRSA252).